The sequence spans 281 residues: GPN-loop GTPase 3 (281 aa).

13 to 18 (GSGKST) contacts GTP. Residues 70–72 (GPN) carry the Gly-Pro-Asn (GPN)-loop; involved in dimer interface motif. A GTP-binding site is contributed by 173–176 (SKMD). Residues 259–281 (VQYGEDEEPKEPKDMDEGDFTAQ) form a disordered region.

Belongs to the GPN-loop GTPase family. Heterodimers with GPN1 or GPN2. Binds to RNA polymerase II (RNAPII).

Its function is as follows. Small GTPase required for proper nuclear import of RNA polymerase II and III (RNAPII and RNAPIII). May act at an RNAP assembly step prior to nuclear import. This is GPN-loop GTPase 3 from Mycosarcoma maydis (Corn smut fungus).